A 660-amino-acid polypeptide reads, in one-letter code: Acetyl-coenzyme A synthetase (660 aa).

Residues 197–200 and T317 each bind CoA; that span reads RGGK. ATP-binding positions include 397–399, 421–426, D512, and R528; these read GEP and DTWWQT. S536 serves as a coordination point for CoA. R539 contacts ATP. Residues V550, H552, and V555 each coordinate Mg(2+). K625 is modified (N6-acetyllysine).

Belongs to the ATP-dependent AMP-binding enzyme family. Mg(2+) is required as a cofactor. Acetylated. Deacetylation by the SIR2-homolog deacetylase activates the enzyme.

The catalysed reaction is acetate + ATP + CoA = acetyl-CoA + AMP + diphosphate. Catalyzes the conversion of acetate into acetyl-CoA (AcCoA), an essential intermediate at the junction of anabolic and catabolic pathways. AcsA undergoes a two-step reaction. In the first half reaction, AcsA combines acetate with ATP to form acetyl-adenylate (AcAMP) intermediate. In the second half reaction, it can then transfer the acetyl group from AcAMP to the sulfhydryl group of CoA, forming the product AcCoA. The sequence is that of Acetyl-coenzyme A synthetase from Burkholderia thailandensis (strain ATCC 700388 / DSM 13276 / CCUG 48851 / CIP 106301 / E264).